A 246-amino-acid polypeptide reads, in one-letter code: MSKKISRSIDTIIFVDINSRYTKCQYCDIYIIIDNENGYINITSLCSIISKKIGKEKTFKQWKKNKTSKEQVEEMAKLEKISEKKLFIDICSGPKKMQGKYIHPGLVTLVVHWISPEFAAKVSLWIEEWRRYSSNNSDKYYESLLTANPSYNSQREKEIQEKLLGKYGGEIEVETKTGRIDLMTNDKIIEIKNYYKWKNAIGQLFAYSIYYPDKKKCLYLFNVGTNDLNEIKKVCKKYDVKLKVYD.

The 110-residue stretch at 20 to 129 folds into the KilA-N domain; that stretch reads RYTKCQYCDI…AKVSLWIEEW (110 aa).

In Acanthamoeba polyphaga mimivirus (APMV), this protein is Putative KilA-N domain-containing protein L33.